The chain runs to 332 residues: GLIPR1-like protein 2 (332 aa).

Positions 57–191 (LHNELRGTVF…THAALFICNY (135 aa)) constitute an SCP domain. N-linked (GlcNAc...) asparagine glycosylation is present at N145. The chain crosses the membrane as a helical span at residues 253–273 (IFILFLRVASLLLCVIVVLIV). The segment at 293–332 (EGKTEVEIVMEEGEGEGEGGEGEGEGEEKEEEEMLEEDEQ) is disordered. Over residues 300–332 (IVMEEGEGEGEGGEGEGEGEEKEEEEMLEEDEQ) the composition is skewed to acidic residues.

Belongs to the CRISP family.

It is found in the membrane. The polypeptide is GLIPR1-like protein 2 (Glipr1l2) (Mus musculus (Mouse)).